The sequence spans 721 residues: Ophiobolin F synthase oblA (721 aa).

The segment at 5 to 325 (YDQPYSVLLD…RYNLKAEWNE (321 aa)) is (7Z)-ophiobola-7,19-dien-3-ol synthase. The Mg(2+) site is built by Asp97 and Asp101. Substrate is bound at residue Asp97. The DDXXD 1 signature appears at 97-101 (DDVID). Residues 185 to 188 (RSLD), Asn229, 233 to 237 (SFEKE), and 316 to 317 (RY) each bind substrate. An NSE/DTE motif is present at residues 229–237 (NDLFSFEKE). Residues 326–721 (LQMLRAKHGV…LRLMMEMLKV (396 aa)) are geranylfarnesyl diphosphate synthase. A disordered region spans residues 348–387 (SMDHIWKKGSTQGESKGEKRKRQSVNGTNGVNGTNGVKKP). The span at 372 to 384 (VNGTNGVNGTNGV) shows a compositional bias: low complexity. 3 residues coordinate isopentenyl diphosphate: Lys432, Arg435, and His464. Mg(2+) contacts are provided by Asp471 and Asp475. The DDXXD 2 motif lies at 471 to 475 (DDLED). Arg480 provides a ligand contact to dimethylallyl diphosphate. Arg481 serves as a coordination point for isopentenyl diphosphate. Residues Lys558, Thr559, Gln597, Asn604, Lys614, and Lys624 each coordinate dimethylallyl diphosphate.

This sequence in the N-terminal section; belongs to the terpene synthase family. The protein in the C-terminal section; belongs to the FPP/GGPP synthase family. Mg(2+) is required as a cofactor.

It carries out the reaction isopentenyl diphosphate + (2E,6E)-farnesyl diphosphate = (2E,6E,10E)-geranylgeranyl diphosphate + diphosphate. The enzyme catalyses isopentenyl diphosphate + (2E,6E,10E)-geranylgeranyl diphosphate = (2E,6E,10E,14E)-geranylfarnesyl diphosphate + diphosphate. The catalysed reaction is (2E,6E,10E,14E)-geranylfarnesyl diphosphate + H2O = ophiobolin F + diphosphate. Its pathway is secondary metabolite biosynthesis; terpenoid biosynthesis. In terms of biological role, bifunctional sesterterpene synthase; part of the gene cluster that mediates the biosynthesis of the sesterterpenes ophiobolins, fungal phytotoxins with potential anti-cancer activities. The first step of the pathway is performed by the sesterterpene synthase oblA that possesses both prenyl transferase and terpene cyclase activity, converting isopentenyl diphosphate and dimethylallyl diphosphate into geranylfarnesyl diphosphate (GFPP) and further converting GFPP into ophiobolin F, respectively. Other sesterterpenoids (C(25) terpenoids) are found as minor products of oblA. The cytochrome P450 monooxygenase oblB then catalyzes a four-step oxidative transformation of ophiobolin F to yield ophiobolin C. The FAD-dependent oxidoreductase oblC might be involved in a later oxidation step that produces ophiobolin A. The sequence is that of Ophiobolin F synthase oblA from Cochliobolus heterostrophus (strain C5 / ATCC 48332 / race O) (Southern corn leaf blight fungus).